The primary structure comprises 156 residues: Lipoprotein signal peptidase (156 aa).

Residues 62–82 traverse the membrane as a helical segment; sequence GNTVFMVLSAVIIAILSYTKI. Residues aspartate 115 and aspartate 133 contribute to the active site. Residues 126-146 traverse the membrane as a helical segment; sequence WPAFNLADLTITCGVIVFLAM.

Belongs to the peptidase A8 family.

Its subcellular location is the cell inner membrane. It catalyses the reaction Release of signal peptides from bacterial membrane prolipoproteins. Hydrolyzes -Xaa-Yaa-Zaa-|-(S,diacylglyceryl)Cys-, in which Xaa is hydrophobic (preferably Leu), and Yaa (Ala or Ser) and Zaa (Gly or Ala) have small, neutral side chains.. The protein operates within protein modification; lipoprotein biosynthesis (signal peptide cleavage). Functionally, this protein specifically catalyzes the removal of signal peptides from prolipoproteins. The chain is Lipoprotein signal peptidase from Anaplasma phagocytophilum (strain HZ).